The primary structure comprises 627 residues: Muscarinic acetylcholine receptor gar-2 (627 aa).

Residues Met1 to Ala9 are Extracellular-facing. A helical transmembrane segment spans residues Leu10–Tyr30. Residues Tyr31–Asn41 are Cytoplasmic-facing. A helical membrane pass occupies residues Tyr42 to Tyr62. Over Thr63–Leu81 the chain is Extracellular. A disulfide bridge connects residues Cys79 and Cys160. Residues Trp82–Val102 traverse the membrane as a helical segment. At Asp103–Arg122 the chain is on the cytoplasmic side. The chain crosses the membrane as a helical span at residues Val123–Phe143. The Extracellular portion of the chain corresponds to Gly144–Met172. A helical membrane pass occupies residues Gly173–Ile193. The Cytoplasmic segment spans residues Tyr194–Thr549. Disordered stretches follow at residues Val222–Pro266, Arg423–Gly442, and Ala449–Asn475. Over residues Asn231 to Gly264 the composition is skewed to low complexity. Basic and acidic residues predominate over residues Lys459 to Asn475. Residues Ile550–Ile570 form a helical membrane-spanning segment. The Extracellular segment spans residues Tyr571–Leu586. A helical membrane pass occupies residues Tyr587 to Asn609. The Cytoplasmic segment spans residues Gln610–Val627.

Belongs to the G-protein coupled receptor 1 family. Muscarinic acetylcholine receptor subfamily. In terms of tissue distribution, expressed in putative sensory neurons, many cells of the ventral cord and in the HSN motor neurons. Expressed in some cholinergic motor neurons and GABAergic motor neurons, which are the two major types of ventral cord motor neurons.

It is found in the cell membrane. It localises to the cell projection. The protein localises to the axon. The muscarinic acetylcholine receptor mediates various cellular responses, including inhibition of adenylate cyclase, breakdown of phosphoinositides and modulation of potassium channels through the action of G proteins. Primary transducing effect is Pi turnover. Regulates the activity of ventral cord motor neurons. Couples to the G(o)-alpha G-protein subunit goa-1 to negatively regulate cholinergic receptor activity in the presence of high levels of the neurotransmitter acetylcholine in ventral cord motor neurons. As acetylcholine depolarizes body wall muscles, modulation of acetylcholine levels most likely results in the control locomotory behavior and egg-laying. This is Muscarinic acetylcholine receptor gar-2 from Caenorhabditis elegans.